A 501-amino-acid chain; its full sequence is ATP synthase subunit alpha (501 aa).

169 to 176 (GDRQTGKT) contacts ATP.

This sequence belongs to the ATPase alpha/beta chains family. In terms of assembly, F-type ATPases have 2 components, CF(1) - the catalytic core - and CF(0) - the membrane proton channel. CF(1) has five subunits: alpha(3), beta(3), gamma(1), delta(1), epsilon(1). CF(0) has three main subunits: a(1), b(2) and c(9-12). The alpha and beta chains form an alternating ring which encloses part of the gamma chain. CF(1) is attached to CF(0) by a central stalk formed by the gamma and epsilon chains, while a peripheral stalk is formed by the delta and b chains.

It is found in the cell membrane. The enzyme catalyses ATP + H2O + 4 H(+)(in) = ADP + phosphate + 5 H(+)(out). Functionally, produces ATP from ADP in the presence of a proton gradient across the membrane. The alpha chain is a regulatory subunit. The polypeptide is ATP synthase subunit alpha (Streptococcus pneumoniae serotype 4 (strain ATCC BAA-334 / TIGR4)).